Consider the following 115-residue polypeptide: Regulator of ribonuclease activity B (115 aa).

Belongs to the RraB family. Interacts with the C-terminal region of Rne.

The protein resides in the cytoplasm. Its function is as follows. Globally modulates RNA abundance by binding to RNase E (Rne) and regulating its endonucleolytic activity. Can modulate Rne action in a substrate-dependent manner by altering the composition of the degradosome. The polypeptide is Regulator of ribonuclease activity B (Aeromonas hydrophila subsp. hydrophila (strain ATCC 7966 / DSM 30187 / BCRC 13018 / CCUG 14551 / JCM 1027 / KCTC 2358 / NCIMB 9240 / NCTC 8049)).